The sequence spans 390 residues: MKIAMVTWEYPPRIVGGLAIHCKGLAEGLVRNGHEVDVITVGYDLPEYENINGVNVYRVRPISHPHFLTWAMFMAEEMEKKLGILGVDKYDVIHCHDWMTHFVGANLKHICRMPYVQSIHSTEIGRCGGLYSDDSKAIHAMEYLSTYESCQVITVSKSLKEEVCSIFNTPEDKVKVIYNGINPWEFDINLSWEEKINFRRSIGVQDDEKMILFVGRLTYQKGIEYLIRAMPKILERHNAKLVIAGSGDMRDYLEDLCYQLGVRHKVVFLGFVNGDTLKKLYKSADVVVIPSVYEPFGIVALEAMAAGTPVVVSSVGGLMEIIKHEVNGIWVYPKNPDSIAWGVDRVLSDWGFREYIVNNAKKDVYEKYSWDNIAKETVNVYKIAMEMMGR.

It belongs to the glycosyltransferase group 1 family. Glycosyltransferase 4 subfamily.

This is an uncharacterized protein from Methanocaldococcus jannaschii (strain ATCC 43067 / DSM 2661 / JAL-1 / JCM 10045 / NBRC 100440) (Methanococcus jannaschii).